The chain runs to 206 residues: Protein-methionine-sulfoxide reductase heme-binding subunit MsrQ (206 aa).

Transmembrane regions (helical) follow at residues Ile-14 to Ala-34, Phe-45 to Thr-65, Met-82 to Asp-102, Pro-118 to Thr-138, Trp-149 to Trp-169, and Gln-179 to Trp-199.

It belongs to the MsrQ family. Heterodimer of a catalytic subunit (MsrP) and a heme-binding subunit (MsrQ). It depends on FMN as a cofactor. Heme b is required as a cofactor.

Its subcellular location is the cell inner membrane. Its function is as follows. Part of the MsrPQ system that repairs oxidized periplasmic proteins containing methionine sulfoxide residues (Met-O), using respiratory chain electrons. Thus protects these proteins from oxidative-stress damage caused by reactive species of oxygen and chlorine generated by the host defense mechanisms. MsrPQ is essential for the maintenance of envelope integrity under bleach stress, rescuing a wide series of structurally unrelated periplasmic proteins from methionine oxidation. MsrQ provides electrons for reduction to the reductase catalytic subunit MsrP, using the quinone pool of the respiratory chain. The polypeptide is Protein-methionine-sulfoxide reductase heme-binding subunit MsrQ (Bordetella bronchiseptica (strain ATCC BAA-588 / NCTC 13252 / RB50) (Alcaligenes bronchisepticus)).